Here is a 432-residue protein sequence, read N- to C-terminus: Glutamyl-tRNA reductase (432 aa).

Substrate contacts are provided by residues 55–58 (TCNR), serine 114, 119–121 (ETQ), and glutamine 125. Cysteine 56 (nucleophile) is an active-site residue. Residue 194 to 199 (GAGEMI) coordinates NADP(+).

The protein belongs to the glutamyl-tRNA reductase family. As to quaternary structure, homodimer.

It catalyses the reaction (S)-4-amino-5-oxopentanoate + tRNA(Glu) + NADP(+) = L-glutamyl-tRNA(Glu) + NADPH + H(+). It functions in the pathway porphyrin-containing compound metabolism; protoporphyrin-IX biosynthesis; 5-aminolevulinate from L-glutamyl-tRNA(Glu): step 1/2. Catalyzes the NADPH-dependent reduction of glutamyl-tRNA(Glu) to glutamate 1-semialdehyde (GSA). The chain is Glutamyl-tRNA reductase from Burkholderia thailandensis (strain ATCC 700388 / DSM 13276 / CCUG 48851 / CIP 106301 / E264).